An 84-amino-acid polypeptide reads, in one-letter code: Beta-mammal toxin Cn2 (84 aa).

The signal sequence occupies residues 1–16 (LLIITACLALIGTVWA). Positions 17-82 (KEGYLVDKNT…VWPLPNKRCS (66 aa)) constitute an LCN-type CS-alpha/beta domain. 4 disulfide bridges follow: Cys28-Cys81, Cys32-Cys57, Cys41-Cys62, and Cys45-Cys64. Ser82 is subject to Serine amide.

This sequence belongs to the long (4 C-C) scorpion toxin superfamily. Sodium channel inhibitor family. Beta subfamily. Expressed by the venom gland.

Its subcellular location is the secreted. Its function is as follows. Mammal beta-toxins bind voltage-independently at site-4 of sodium channels (Nav) and shift the activation voltage to more negative potentials. This toxin is active against mammals. The polypeptide is Beta-mammal toxin Cn2 (Centruroides noxius (Mexican scorpion)).